We begin with the raw amino-acid sequence, 770 residues long: MASLKVFLAVYLLGGITFLPLVLFTLYKIHLLYSNLKSASKKELDHDTADEIDEKTRLLARDIDPEFKARKLEEQLGVKVFNKGWITVTKQYYYHSSEVAVILKNSNNNKDSDTALQEQILQRTDLKKKQRFFAVLRHGNLFLYKDDSQNANLVHAISLQNRFITIWPRFDELGKEELPDASLFTKRTCIAIFKNDLVSIDSKNHNVILPHFDPLTSAESNNGDISTNDTTHEYQSQFHSSNQFFLYFDNNMDKEDWYYQLINASKNSNSLSTGLLDPNVSANAAHLKTKDMLQLIQDINSTENQLTTKWLNALLGRLFLSLQQTDTLNKFIHEKICKKLNKIKTPGFLDDLVVEKVDVGDSAPLFTSPELLELSPEGSTKIAIDVQYRGNLTIIIATKASINLGSRFKQREVSLQLSIKIKEFSGPLLFLIKPPPSNRIWYAFRTEPIMDFEIEPIVSSSKLSYNVVTNAIKSKFAEAVKESLVVPFMDDIVFYPTPNEVYRGGIWEEQDPEAAARARTAAAASDMNNTSAKEHLEALQEGGMKTQSRIKKALRPERKKENLKDLVDASGVATKTTTQTTVTTATNDDVSSSENSTKSRKYFKNSIKKIGRWYKDNVGNSSDTEDMDEIDVQDKKNDDSADERESDNPILTSNPKMISNRRPVPRRPSQPLNTLSPKLEGRKEKDTENFPVPPSASNMNASKMFANKENRKFSVSSNDSQNSLKNGDPHVKASKLESSQAFVKKTSQNRFNDGFFKQDLEFEEQREPKL.

Residues methionine 1 to lysine 5 lie on the Cytoplasmic side of the membrane. Residues valine 6–leucine 26 form a helical; Signal-anchor for type II membrane protein membrane-spanning segment. The Lumenal portion of the chain corresponds to tyrosine 27–leucine 770. In terms of domain architecture, PH spans threonine 114 to lysine 266. 7 N-linked (GlcNAc...) asparagine glycosylation sites follow: asparagine 228, asparagine 263, asparagine 279, asparagine 300, asparagine 391, asparagine 528, and asparagine 529. The SMP-LTD domain maps to asparagine 304–glycine 504. Disordered stretches follow at residues glutamate 541 to leucine 566, threonine 578 to arginine 600, and lysine 615 to leucine 770. Positions leucine 554–leucine 566 are enriched in basic and acidic residues. Residues asparagine 587 to serine 596 show a composition bias toward polar residues. 2 N-linked (GlcNAc...) asparagine glycosylation sites follow: asparagine 595 and asparagine 620. Phosphoserine occurs at positions 640 and 669. Over residues leucine 679 to glutamate 688 the composition is skewed to basic and acidic residues. Asparagine 700 is a glycosylation site (N-linked (GlcNAc...) asparagine). Polar residues-rich tracts occupy residues phenylalanine 713–lysine 725 and leucine 736–phenylalanine 751. Residue serine 717 is modified to Phosphoserine. N-linked (GlcNAc...) asparagine glycosylation occurs at asparagine 718. Residues serine 720 and serine 723 each carry the phosphoserine modification. Residues phenylalanine 756–leucine 770 show a composition bias toward basic and acidic residues.

Its subcellular location is the endoplasmic reticulum membrane. It localises to the nucleus membrane. In terms of biological role, during endoplasmic reticulum (ER) stress or when cellular ceramide levels increase, induces contacts between the ER and medial-Golgi complex to facilitate non-vesicular transport of ceramides from the ER to the Golgi complex where they are converted to complex sphingolipids, preventing toxic ceramide accumulation. The protein is Nucleus-vacuole junction protein 2 of Saccharomyces cerevisiae (strain ATCC 204508 / S288c) (Baker's yeast).